The chain runs to 1567 residues: ABC multidrug transporter MDR1 (1567 aa).

Pro residues predominate over residues 1 to 11; that stretch reads MASQPPQPPSG. A disordered region spans residues 1–37; that stretch reads MASQPPQPPSGQPDTQYEEYQSEVITETTNRPTPAAD. Residues 22-32 are compositionally biased toward polar residues; that stretch reads SEVITETTNRP. 3 N-linked (GlcNAc...) asparagine glycosylation sites follow: Asn-149, Asn-157, and Asn-356. In terms of domain architecture, ABC transporter 1 spans 167–432; that stretch reads VQYQDTFLSP…FEEMGWYCPP (266 aa). Helical transmembrane passes span 543–563, 571–591, 636–656, 661–681, 691–711, and 798–818; these read STIA…SLFF, GFFA…LMSI, IPIK…LGGL, AKFF…SAIF, IPQA…YTGF, and LGIL…VSEL. Residues Asn-819, Asn-895, and Asn-912 are each glycosylated (N-linked (GlcNAc...) asparagine). The region spanning 891–1134 is the ABC transporter 2 domain; that stretch reads FTWRNVTYDI…LLNYFETHGA (244 aa). ATP is bound at residue 927–934; the sequence is GVSGAGKT. The disordered stretch occupies residues 1172 to 1202; the sequence is ESRHVQQELDRIQSETSKRNEGHGQSAEKEP. The helical transmembrane segment at 1231 to 1251 threads the bilayer; the sequence is IWGKLLLGLTSALFIGFSFFL. N-linked (GlcNAc...) asparagine glycosylation occurs at Asn-1253. 5 consecutive transmembrane segments (helical) span residues 1257–1277, 1305–1325, 1345–1365, 1372–1392, and 1498–1518; these read AGLQ…SSLV, VFLL…GIIA, ILLL…QMII, ETAG…NGVL, and GIGW…YYLI.

Belongs to the ABC transporter superfamily. ABCG family. PDR (TC 3.A.1.205) subfamily.

It localises to the cell membrane. It carries out the reaction voriconazole(in) + ATP + H2O = voriconazole(out) + ADP + phosphate + H(+). The catalysed reaction is fluconazole(in) + ATP + H2O = fluconazole(out) + ADP + phosphate + H(+). The enzyme catalyses (R)-miconazole(in) + ATP + H2O = (R)-miconazole(out) + ADP + phosphate + H(+). It catalyses the reaction (S)-miconazole(in) + ATP + H2O = (S)-miconazole(out) + ADP + phosphate + H(+). Functionally, pleiotropic ABC efflux transporter that may be involved in the modulation susceptibility to a wide range of unrelated cytotoxic compounds. The chain is ABC multidrug transporter MDR1 from Trichophyton equinum (strain ATCC MYA-4606 / CBS 127.97) (Horse ringworm fungus).